We begin with the raw amino-acid sequence, 276 residues long: Formamidopyrimidine-DNA glycosylase (276 aa).

Proline 2 (schiff-base intermediate with DNA) is an active-site residue. Glutamate 3 serves as the catalytic Proton donor. Lysine 58 functions as the Proton donor; for beta-elimination activity in the catalytic mechanism. Positions 94, 112, and 157 each coordinate DNA. The segment at phenylalanine 242–arginine 276 adopts an FPG-type zinc-finger fold. Arginine 266 (proton donor; for delta-elimination activity) is an active-site residue.

The protein belongs to the FPG family. In terms of assembly, monomer. Zn(2+) serves as cofactor.

It carries out the reaction Hydrolysis of DNA containing ring-opened 7-methylguanine residues, releasing 2,6-diamino-4-hydroxy-5-(N-methyl)formamidopyrimidine.. The catalysed reaction is 2'-deoxyribonucleotide-(2'-deoxyribose 5'-phosphate)-2'-deoxyribonucleotide-DNA = a 3'-end 2'-deoxyribonucleotide-(2,3-dehydro-2,3-deoxyribose 5'-phosphate)-DNA + a 5'-end 5'-phospho-2'-deoxyribonucleoside-DNA + H(+). In terms of biological role, involved in base excision repair of DNA damaged by oxidation or by mutagenic agents. Acts as a DNA glycosylase that recognizes and removes damaged bases. Has a preference for oxidized purines, such as 7,8-dihydro-8-oxoguanine (8-oxoG). Has AP (apurinic/apyrimidinic) lyase activity and introduces nicks in the DNA strand. Cleaves the DNA backbone by beta-delta elimination to generate a single-strand break at the site of the removed base with both 3'- and 5'-phosphates. The chain is Formamidopyrimidine-DNA glycosylase from Paraburkholderia phytofirmans (strain DSM 17436 / LMG 22146 / PsJN) (Burkholderia phytofirmans).